The following is a 149-amino-acid chain: Calmodulin-2 (149 aa).

The residue at position 2 (alanine 2) is an N-acetylalanine. EF-hand domains are found at residues 8 to 43, 44 to 79, 81 to 116, and 117 to 149; these read EQIA…LGQN, PTEA…KMKD, DSEE…LGEK, and LTDE…MTSK. Residues aspartate 21, aspartate 23, aspartate 25, threonine 27, glutamate 32, aspartate 57, aspartate 59, asparagine 61, threonine 63, glutamate 68, aspartate 94, aspartate 96, asparagine 98, and glutamate 105 each contribute to the Ca(2+) site. Lysine 116 is subject to N6,N6,N6-trimethyllysine. 5 residues coordinate Ca(2+): aspartate 130, aspartate 132, aspartate 134, glutamine 136, and glutamate 141.

It belongs to the calmodulin family.

Calmodulin mediates the control of a large number of enzymes, ion channels and other proteins by Ca(2+). Among the enzymes to be stimulated by the calmodulin-Ca(2+) complex are a number of protein kinases and phosphatases. This chain is Calmodulin-2 (CAM2), found in Branchiostoma lanceolatum (Common lancelet).